A 262-amino-acid polypeptide reads, in one-letter code: MQTIIRVEKLAKTFNQHQALHAVDLNIHHGEMVALLGPSGSGKSTLLRHLSGLITGDKSVGSHIELLGRTVQREGRLARDIRKSRAHTGYIFQQFNLVNRLSVLENVLIGALGSTPFWRTCFSYFTREQKQRALQALTRVGMVHFAHQRVSTLSGGQQQRVAIARALMQQAKVILADEPIASLDPESARIVMDTLRDINQNDGITVVVTLHQVDYALRYCERIVALRQGHVFYDGCSQLFDNERFDHLYRSINRVEENAKAA.

Positions Ile5–Asn253 constitute an ABC transporter domain. Gly37–Ser44 is a binding site for ATP.

Belongs to the ABC transporter superfamily. Phosphonates importer (TC 3.A.1.9.1) family. The complex is composed of two ATP-binding proteins (PhnC), two transmembrane proteins (PhnE) and a solute-binding protein (PhnD).

It localises to the cell inner membrane. It carries out the reaction phosphonate(out) + ATP + H2O = phosphonate(in) + ADP + phosphate + H(+). Functionally, part of the ABC transporter complex PhnCDE involved in phosphonates import. Responsible for energy coupling to the transport system. This Escherichia coli O6:H1 (strain CFT073 / ATCC 700928 / UPEC) protein is Phosphonates import ATP-binding protein PhnC.